The chain runs to 251 residues: 4-hydroxy-tetrahydrodipicolinate reductase (251 aa).

NAD(+) contacts are provided by residues 8-13 (GAKGRM), 76-78 (GTT), and 106-109 (APNF). The Proton donor/acceptor role is filled by histidine 136. Histidine 137 provides a ligand contact to (S)-2,3,4,5-tetrahydrodipicolinate. Lysine 140 acts as the Proton donor in catalysis. 146-147 (GT) contributes to the (S)-2,3,4,5-tetrahydrodipicolinate binding site.

Belongs to the DapB family.

Its subcellular location is the cytoplasm. The catalysed reaction is (S)-2,3,4,5-tetrahydrodipicolinate + NAD(+) + H2O = (2S,4S)-4-hydroxy-2,3,4,5-tetrahydrodipicolinate + NADH + H(+). It carries out the reaction (S)-2,3,4,5-tetrahydrodipicolinate + NADP(+) + H2O = (2S,4S)-4-hydroxy-2,3,4,5-tetrahydrodipicolinate + NADPH + H(+). It participates in amino-acid biosynthesis; L-lysine biosynthesis via DAP pathway; (S)-tetrahydrodipicolinate from L-aspartate: step 4/4. In terms of biological role, catalyzes the conversion of 4-hydroxy-tetrahydrodipicolinate (HTPA) to tetrahydrodipicolinate. The chain is 4-hydroxy-tetrahydrodipicolinate reductase from Bifidobacterium longum subsp. infantis (strain ATCC 15697 / DSM 20088 / JCM 1222 / NCTC 11817 / S12).